The primary structure comprises 292 residues: uncharacterized protein (292 aa).

4 helical membrane-spanning segments follow: residues 17-37 (LFYTFVLVAWLFIGMILFPAL), 135-155 (LIAVLYALIGTPLFLTVIGQL), 166-186 (TTLWIVTIVYIFISAVIYDIV), and 216-236 (FHGVLPYCIVVLGLALITALY). The interval 267 to 292 (EKSEDKKSIVTSRIEEENEDEISDYE) is disordered. Residues 282-292 (EENEDEISDYE) show a composition bias toward acidic residues.

It is found in the membrane. This is an uncharacterized protein from Caenorhabditis elegans.